The chain runs to 163 residues: Large ribosomal subunit protein mL59 (163 aa).

The tract at residues 33 to 53 (PAGADPETHKTPYQEESPNPF) is disordered.

It belongs to the mitochondrion-specific ribosomal protein mL59 family. As to quaternary structure, component of the mitochondrial large ribosomal subunit (mt-LSU). Mature N.crassa 74S mitochondrial ribosomes consist of a small (37S) and a large (54S) subunit. The 37S small subunit contains a 16S ribosomal RNA (16S mt-rRNA) and 32 different proteins. The 54S large subunit contains a 23S rRNA (23S mt-rRNA) and 42 different proteins.

The protein localises to the mitochondrion. Its function is as follows. Component of the mitochondrial ribosome (mitoribosome), a dedicated translation machinery responsible for the synthesis of mitochondrial genome-encoded proteins, including at least some of the essential transmembrane subunits of the mitochondrial respiratory chain. The mitoribosomes are attached to the mitochondrial inner membrane and translation products are cotranslationally integrated into the membrane. The sequence is that of Large ribosomal subunit protein mL59 (mrpl25) from Neurospora crassa (strain ATCC 24698 / 74-OR23-1A / CBS 708.71 / DSM 1257 / FGSC 987).